The sequence spans 349 residues: Dihydroorotate dehydrogenase (quinone) (349 aa).

FMN is bound by residues 59 to 63 and threonine 83; that span reads PGFDK. Lysine 63 contributes to the substrate binding site. Substrate is bound at residue 108–112; that stretch reads NRMGF. 2 residues coordinate FMN: asparagine 142 and asparagine 173. Asparagine 173 provides a ligand contact to substrate. The active-site Nucleophile is serine 176. Asparagine 178 is a binding site for substrate. FMN-binding residues include lysine 212 and serine 240. 241–242 contributes to the substrate binding site; that stretch reads NT. Residues glycine 262, glycine 291, and 312-313 each bind FMN; that span reads YS.

Belongs to the dihydroorotate dehydrogenase family. Type 2 subfamily. As to quaternary structure, monomer. The cofactor is FMN.

It is found in the cell membrane. The enzyme catalyses (S)-dihydroorotate + a quinone = orotate + a quinol. It functions in the pathway pyrimidine metabolism; UMP biosynthesis via de novo pathway; orotate from (S)-dihydroorotate (quinone route): step 1/1. In terms of biological role, catalyzes the conversion of dihydroorotate to orotate with quinone as electron acceptor. This chain is Dihydroorotate dehydrogenase (quinone), found in Novosphingobium aromaticivorans (strain ATCC 700278 / DSM 12444 / CCUG 56034 / CIP 105152 / NBRC 16084 / F199).